The following is a 342-amino-acid chain: Dof zinc finger protein DOF4.6 (342 aa).

Residues 21-54 (NTCPKPQPQPLQPQQPPSVGGERKARPEKDQAVN) are disordered. Residues 25–36 (KPQPQPLQPQQP) show a composition bias toward pro residues. Basic and acidic residues predominate over residues 41–51 (GERKARPEKDQ). The segment at 53–107 (VNCPRCNSTNTKFCYYNNYSLTQPRYFCKGCRRYWTEGGSLRNIPVGGGSRKNKR) adopts a Dof-type zinc-finger fold. Positions 55, 58, 80, and 83 each coordinate Zn(2+). The interval 94–136 (RNIPVGGGSRKNKRSHSSSSDISNNHSDSTQPATKKHLSDHHH) is disordered. The span at 110–122 (SSSSDISNNHSDS) shows a compositional bias: low complexity. Residues 127-136 (TKKHLSDHHH) are compositionally biased toward basic residues.

Accumulates in the stele.

It localises to the nucleus. Transcription factor that binds specifically to a 5'-AA[AG]G-3' consensus core sequence. This chain is Dof zinc finger protein DOF4.6, found in Arabidopsis thaliana (Mouse-ear cress).